Here is a 98-residue protein sequence, read N- to C-terminus: Minor capsid protein P13 (98 aa).

Positions 3–23 (KITPFLIAAVVAVIVLAVWLF) are hydrophobic.

Interacts with the major capsid protein.

It localises to the virion. In terms of biological role, one of the minor capsid proteins that constitute a network internal to the major capsid proteins and outside the lipid membrane. The minor capsid protein P13 does not serve a cross-linking function between neighboring capsomers, it may play a role in the viral capsid assembly. The chain is Minor capsid protein P13 from Chlorella (PBCV-1).